The sequence spans 364 residues: Aminomethyltransferase (364 aa).

It belongs to the GcvT family. In terms of assembly, the glycine cleavage system is composed of four proteins: P, T, L and H.

It catalyses the reaction N(6)-[(R)-S(8)-aminomethyldihydrolipoyl]-L-lysyl-[protein] + (6S)-5,6,7,8-tetrahydrofolate = N(6)-[(R)-dihydrolipoyl]-L-lysyl-[protein] + (6R)-5,10-methylene-5,6,7,8-tetrahydrofolate + NH4(+). In terms of biological role, the glycine cleavage system catalyzes the degradation of glycine. This is Aminomethyltransferase from Thermotoga sp. (strain RQ2).